We begin with the raw amino-acid sequence, 153 residues long: Peptide deformylase (153 aa).

Fe cation-binding residues include Cys-87 and His-129. Residue Glu-130 is part of the active site. Position 133 (His-133) interacts with Fe cation.

Belongs to the polypeptide deformylase family. The cofactor is Fe(2+).

The catalysed reaction is N-terminal N-formyl-L-methionyl-[peptide] + H2O = N-terminal L-methionyl-[peptide] + formate. Its function is as follows. Removes the formyl group from the N-terminal Met of newly synthesized proteins. Requires at least a dipeptide for an efficient rate of reaction. N-terminal L-methionine is a prerequisite for activity but the enzyme has broad specificity at other positions. The chain is Peptide deformylase from Dictyoglomus thermophilum (strain ATCC 35947 / DSM 3960 / H-6-12).